The chain runs to 508 residues: MELDSALEAPSQEDSNLSEELSHSAFGQAFSKILHCLARPEARRGNVKDAVLKDLGDLIEATEFDRLFEGTGARLRGMPETLGQVAKALEKYAAPSKEEEGGGDGHSEAAEKAAQVGLLFLKLLGKVETAKNSLVGPAWQTGLHHLAGPVYIFAITHSLEQPWTTPRSREVAREVLTSLLQVTECGSVAGFLHGENEDEKGRLSVILGLLKPDLYKESWKNNPAIKHVFSWTLQQVTRPWLSQHLERVLPASLVISDDYQTENKILGVHCLHHIVLNVPAADLLQYNRAQVLYHAISNHLYTPEHHLIQAVLLCLLDLFPILEKTLHWKGDGARPTTHCDEVLRLILTHMEPEHRLLLRRTYARNLPAFVNRLGILTVRHLKRLERVIIGYLEVYDGPEEEARLKILETLKLLMQHTWPRVSCRLVVLLKALLKLICDVARDPNLTPESVKSALLQEATDCLILLDRCSQGRVKGLLAKIPQSCEDRKVVNYIRKVQQVSEGAPYNGT.

A disordered region spans residues 1-20 (MELDSALEAPSQEDSNLSEE).

This sequence belongs to the TTI2 family. In terms of assembly, component of the TTT complex composed of TELO2, TTI1 and TTI2. Interacts with TELO2 and TTI1. Interacts with WAC; WAC positively regulates MTOR activity by promoting the assembly of the TTT complex and the RUVBL complex composed of RUVBL1 and RUVBL2 into the TTT-RUVBL complex which leads to the dimerization of the mTORC1 complex and its subsequent activation.

In terms of biological role, regulator of the DNA damage response (DDR). Part of the TTT complex that is required to stabilize protein levels of the phosphatidylinositol 3-kinase-related protein kinase (PIKK) family proteins. The TTT complex is involved in the cellular resistance to DNA damage stresses, like ionizing radiation (IR), ultraviolet (UV) and mitomycin C (MMC). Together with the TTT complex and HSP90 may participate in the proper folding of newly synthesized PIKKs. In Homo sapiens (Human), this protein is TELO2-interacting protein 2 (TTI2).